The chain runs to 258 residues: Hydroxypyruvate isomerase (258 aa).

Catalysis depends on proton donor/acceptor residues E143 and E240.

This sequence belongs to the hyi family. In terms of assembly, homodimer.

The catalysed reaction is 3-hydroxypyruvate = 2-hydroxy-3-oxopropanoate. Its activity is regulated as follows. Not stimulated by addition of pyridoxal 5'-phosphate (0.1 mM), FAD, NAD(+), NADP(+) or ATP (1 mM each). EDTA (10 mM) and metal ions (1 mM) such as Ca(2+), Co(2+), Mg(2+), Ni(2+), Zn(2+) do not affect the enzyme activity. In terms of biological role, catalyzes the reversible isomerization between hydroxypyruvate and 2-hydroxy-3-oxopropanoate (also termed tartronate semialdehyde). Does not catalyze the isomerization of D-fructose to D-glucose or that of D-xylulose to D-xylose. Also does not catalyze racemization of serine, alanine, glycerate or lactate. This chain is Hydroxypyruvate isomerase (hyi), found in Escherichia coli (strain K12).